A 370-amino-acid chain; its full sequence is Cysteine-type anaerobic sulfatase-maturating enzyme (370 aa).

A Radical SAM core domain is found at 1-227 (MPPLSLLIKP…LKNLFDLWYE (227 aa)). The [4Fe-4S] cluster site is built by C15 and C19. S-adenosyl-L-methionine is bound at residue Y21. C22 provides a ligand contact to [4Fe-4S] cluster. Residues G66, S122, R134, and L195 each contribute to the S-adenosyl-L-methionine site. The [4Fe-4S] cluster site is built by C255, C261, and C276. The Proton acceptor role is filled by D277. [4Fe-4S] cluster is bound by residues C317, C320, C326, C330, and C348.

Belongs to the radical SAM superfamily. Anaerobic sulfatase-maturating enzyme family. It depends on [4Fe-4S] cluster as a cofactor.

The catalysed reaction is L-cysteinyl-[sulfatase] + S-adenosyl-L-methionine + H2O = 3-oxo-L-alanyl-[sulfatase] + hydrogen sulfide + 5'-deoxyadenosine + L-methionine + 2 H(+). The protein operates within protein modification; sulfatase oxidation. Involved in 'Cys-type' sulfatase maturation under anaerobic conditions. Catalyzes the post-translational modification of cysteine into 3-oxoalanine (also known as C(alpha)-formylglycine (FGly)), by a free radical chemical mechanism initiated via the reductive cleavage of S-adenosyl-L-methionine (SAM). This is Cysteine-type anaerobic sulfatase-maturating enzyme from Clostridium perfringens (strain 13 / Type A).